A 352-amino-acid chain; its full sequence is Probable dual-specificity RNA methyltransferase RlmN (352 aa).

Catalysis depends on Glu-93, which acts as the Proton acceptor. A Radical SAM core domain is found at 99–333 (FNYGYSVCVT…IRLERGSSID (235 aa)). Cys-106 and Cys-336 form a disulfide bridge. [4Fe-4S] cluster is bound by residues Cys-113, Cys-117, and Cys-120. S-adenosyl-L-methionine-binding positions include 164 to 165 (GE), Ser-196, and Asn-295. Catalysis depends on Cys-336, which acts as the S-methylcysteine intermediate.

Belongs to the radical SAM superfamily. RlmN family. [4Fe-4S] cluster is required as a cofactor.

Its subcellular location is the cytoplasm. The catalysed reaction is adenosine(2503) in 23S rRNA + 2 reduced [2Fe-2S]-[ferredoxin] + 2 S-adenosyl-L-methionine = 2-methyladenosine(2503) in 23S rRNA + 5'-deoxyadenosine + L-methionine + 2 oxidized [2Fe-2S]-[ferredoxin] + S-adenosyl-L-homocysteine. The enzyme catalyses adenosine(37) in tRNA + 2 reduced [2Fe-2S]-[ferredoxin] + 2 S-adenosyl-L-methionine = 2-methyladenosine(37) in tRNA + 5'-deoxyadenosine + L-methionine + 2 oxidized [2Fe-2S]-[ferredoxin] + S-adenosyl-L-homocysteine. Its function is as follows. Specifically methylates position 2 of adenine 2503 in 23S rRNA and position 2 of adenine 37 in tRNAs. In Malacoplasma penetrans (strain HF-2) (Mycoplasma penetrans), this protein is Probable dual-specificity RNA methyltransferase RlmN.